A 128-amino-acid polypeptide reads, in one-letter code: Transcription antitermination protein NusB (128 aa).

Belongs to the NusB family.

Involved in transcription antitermination. Required for transcription of ribosomal RNA (rRNA) genes. Binds specifically to the boxA antiterminator sequence of the ribosomal RNA (rrn) operons. The chain is Transcription antitermination protein NusB from Staphylococcus haemolyticus (strain JCSC1435).